We begin with the raw amino-acid sequence, 169 residues long: Protein yop1 (169 aa).

Residues 1–35 (MASFQDRAQHTIAQLDKELSKYPVLNNLERQTSVP) lie on the Cytoplasmic side of the membrane. A helical transmembrane segment spans residues 36-55 (KVYVILGLGGIYTFLVFFNI). Alanine 56 is a topological domain (lumenal). A helical transmembrane segment spans residues 57–76 (GQLLVNLAGFILPTYYSLDA). Topologically, residues 77–88 (LFSAGKADDTQW) are cytoplasmic. The helical transmembrane segment at 89–103 (LTYWVVYAFFTVVES) threads the bilayer. Over 104–105 (AI) the chain is Lumenal. Residues 106–124 (SAPYWFPFYYIFKFALVLW) form a helical membrane-spanning segment. At 125 to 169 (LALPQTNGAQIVFKSLVQPLVGRYFTGGSTSANLRAQADAATKSQ) the chain is on the cytoplasmic side.

This sequence belongs to the DP1 family. Oligomer.

It is found in the endoplasmic reticulum membrane. Its subcellular location is the golgi apparatus membrane. Functionally, required to generate and maintain the structure of the tubular endoplasmic reticulum network and the vacuole. Induces high curvature in membranes and causes membrane tubule formation. Involved in membrane/vesicle trafficking. The sequence is that of Protein yop1 (yop1) from Emericella nidulans (strain FGSC A4 / ATCC 38163 / CBS 112.46 / NRRL 194 / M139) (Aspergillus nidulans).